A 514-amino-acid chain; its full sequence is Synaptic vesicular amine transporter (514 aa).

At 1–20 the chain is on the cytoplasmic side; the sequence is MALSELALVRWLQESRRSRK. The helical transmembrane segment at 21–41 threads the bilayer; the sequence is LILFIVFLALLLDNMLLTVVV. The Lumenal, vesicle segment spans residues 42 to 129; the sequence is PIIPSYLYSI…EDKDLLNENV (88 aa). Asn-84 and Asn-91 each carry an N-linked (GlcNAc...) asparagine glycan. A disulfide bond links Cys-117 and Cys-324. Residues 130–150 traverse the membrane as a helical segment; the sequence is QVGLLFASKATVQLITNPFIG. Topologically, residues 151–159 are cytoplasmic; the sequence is LLTNRIGYP. A helical transmembrane segment spans residues 160–180; it reads IPIFAGFCIMFVSTIMFAFSS. Residues 181-189 lie on the Lumenal, vesicle side of the membrane; it reads SYAFLLIAR. A helical transmembrane segment spans residues 190–210; the sequence is SLQGIGSSCSSVAGMGMLASV. Residues 211–219 are Cytoplasmic-facing; it reads YTDDEERGN. Residues 220-242 form a helical membrane-spanning segment; it reads VMGIALGGLAMGVLVGPPFGSVL. 2 residues coordinate serotonin: Leu-228 and Val-232. The Lumenal, vesicle segment spans residues 243 to 248; it reads YEFVGK. Residues 249–271 traverse the membrane as a helical segment; sequence TAPFLVLAALVLLDGAIQLFVLQ. At 272-291 the chain is on the cytoplasmic side; it reads PSRVQPESQKGTPLTTLLKD. The helical transmembrane segment at 292 to 311 threads the bilayer; that stretch reads PYILIAAGSICFANMGIAML. Residues Asn-305, Ile-308, Glu-312, Phe-334, and Tyr-341 each coordinate serotonin. At 312 to 328 the chain is on the lumenal, vesicle side; it reads EPALPIWMMETMCSRKW. Residues 329 to 352 traverse the membrane as a helical segment; it reads QLGVAFLPASISYLIGTNIFGILA. Residues 353–357 are Cytoplasmic-facing; that stretch reads HKMGR. A helical membrane pass occupies residues 358 to 378; that stretch reads WLCALLGMIIVGVSILCIPFA. At 379–389 the chain is on the lumenal, vesicle side; sequence KNIYGLIAPNF. A helical transmembrane segment spans residues 390–410; the sequence is GVGFAIGMVDSSMMPIMGYLV. Asp-399 lines the serotonin pocket. The Cytoplasmic portion of the chain corresponds to 411 to 414; it reads DLRH. Residues 415–435 traverse the membrane as a helical segment; the sequence is VSVYGSVYAIADVAFCMGYAI. Residue Tyr-433 participates in serotonin binding. Residues 436–440 are Lumenal, vesicle-facing; that stretch reads GPSAG. Residues 441 to 462 form a helical membrane-spanning segment; sequence GAIAKAIGFPWLMTIIGIIDIL. Topologically, residues 463–514 are cytoplasmic; it reads FAPLCFFLRSPPAKEEKMAILMDHNCPIKTKMYTQNNIQSYPIGEDEESESD. Residues Ser-511 and Ser-513 each carry the phosphoserine modification.

The protein belongs to the major facilitator superfamily. Vesicular transporter family. As to quaternary structure, interacts with SLC6A3. Expressed in neuronal and neuroendocrine tissues. Detected in central and peripheral nervous system in particular in axonal and dendritic processes in dopaminergic cells of substantia nigra, histaminergic neuronal cell bodies of substantia nigra and tuberomammillary nucleus, in ganglion cells of sympathetic glia and in peripheral sympathetic nerve terminals in stomach and duodenum (at protein level). Highly expressed in chromaffin cells of the adrenal medulla and histamine-storing enterochromaffin-like cells of oxyntic mucosa (at protein level).

The protein resides in the cytoplasmic vesicle. The protein localises to the secretory vesicle. It localises to the synaptic vesicle membrane. It is found in the secretory vesicle membrane. Its subcellular location is the cell projection. The protein resides in the axon. The protein localises to the dendrite. The catalysed reaction is serotonin(in) + 2 H(+)(out) = serotonin(out) + 2 H(+)(in). It catalyses the reaction dopamine(in) + 2 H(+)(out) = dopamine(out) + 2 H(+)(in). It carries out the reaction histamine(in) + 2 H(+)(out) = histamine(out) + 2 H(+)(in). Strongly inhibited by reserpine and tetrabenazine. Also inhibited to a lesser extent by ketanserin and fenfluramine. Reserpine and ketanserin inhibit by blocking the substrate-binding pocket. Tetrabenazine traps SLC18A2/VMAT2 in an occluded conformation and its inhibition is specific to SLC18A2/VMAT2 but not SLC18A1/VMAT1. Electrogenic antiporter that exchanges one cationic monoamine with two intravesicular protons across the membrane of secretory and synaptic vesicles. Uses the electrochemical proton gradient established by the V-type proton-pump ATPase to accumulate high concentrations of monoamines inside the vesicles prior to their release via exocytosis. Transports a variety of catecholamines such as dopamine, adrenaline and noradrenaline, histamine, and indolamines such as serotonin. Regulates the transvesicular monoaminergic gradient that determines the quantal size. Mediates somatodendritic dopamine release in hippocampal neurons, likely as part of a regulated secretory pathway that integrates retrograde synaptic signals. Acts as a primary transporter for striatal dopamine loading ensuring impulse-dependent release of dopamine at the synaptic cleft. Responsible for histamine and serotonin storage and subsequent corelease from mast cell granules. This is Synaptic vesicular amine transporter (SLC18A2) from Homo sapiens (Human).